Here is a 270-residue protein sequence, read N- to C-terminus: tRNA pseudouridine synthase A (270 aa).

D51 functions as the Nucleophile in the catalytic mechanism. Position 109 (Y109) interacts with substrate.

The protein belongs to the tRNA pseudouridine synthase TruA family. In terms of assembly, homodimer.

The enzyme catalyses uridine(38/39/40) in tRNA = pseudouridine(38/39/40) in tRNA. Formation of pseudouridine at positions 38, 39 and 40 in the anticodon stem and loop of transfer RNAs. In Burkholderia multivorans (strain ATCC 17616 / 249), this protein is tRNA pseudouridine synthase A.